The sequence spans 229 residues: Secretory carrier-associated membrane protein 4 (229 aa).

At 1–39 (MSEKENNFPPLPKFIPVKPCFYQNFSDEIPVEHQVLVKR) the chain is on the cytoplasmic side. The next 4 membrane-spanning stretches (helical) occupy residues 40 to 60 (IYRL…ACLA), 61 to 81 (WWIG…LLLF), 105 to 125 (FMAF…QAIG), and 149 to 169 (VVML…AIAI). At 170-229 (MKVHRIYRGAGGSFQKAQTEWNTGTWRNPPSREAQYNNFSGNSLPEYPTVPSYPGSGQWP) the chain is on the cytoplasmic side. Residue T194 is modified to Phosphothreonine. The segment at 208 to 229 (FSGNSLPEYPTVPSYPGSGQWP) is disordered.

Belongs to the SCAMP family.

It localises to the membrane. In terms of biological role, probably involved in membrane protein trafficking. The protein is Secretory carrier-associated membrane protein 4 (SCAMP4) of Homo sapiens (Human).